Reading from the N-terminus, the 307-residue chain is Histone deacetylase HDT1 (307 aa).

Positions 98-112 (EDEMDLDSEDEDEEL) are enriched in acidic residues. Positions 98-280 (EDEMDLDSED…KSGGSVPCKP (183 aa)) are disordered. The span at 119 to 132 (ENGKADEKKQKSQE) shows a compositional bias: basic and acidic residues. Positions 151 to 197 (DDDSDEDETDDSDEDETDDSDEGLSSEEGDDDSSDEDDTSDDEEEDT) are enriched in acidic residues. Positions 198–211 (PTPKKPEVGKKRPA) are enriched in basic and acidic residues. The span at 265 to 277 (SPKSAPKSGGSVP) shows a compositional bias: low complexity. The C2H2-type; degenerate zinc finger occupies 276–299 (VPCKPCSKSFISETALQAHSRAKM).

This sequence belongs to the histone deacetylase HD2 family. As to quaternary structure, multimer. Isolated as a trimer composed of 3 proteins of 39, 42 and 45 kDa, possibly a homotrimer with different phosphorylation status or a heterotrimer with HDT2 and/or HDT3. Post-translationally, the N-terminus is blocked. In terms of processing, phosphorylated. Required for enzyme activity.

The protein localises to the nucleus. The protein resides in the nucleolus. Inhibited by 3-(4-Aroyl-1-methyl-1H-pyrrol-2-yl)-N-hydroxy-2-propenamides. 3-(1-methyl-4-phenylacetyl-1H-pyrrol-2-yl)-N-hydroxy-2-propenamide 1b and 3-[1-methyl-4-(3-phenyl-2-propenoyl)-1H-pyrrol-2-yl]-N-hydroxy-2-propenamide 1c are very potent inhibitors. Mediates the deacetylation of lysine residues on the N-terminal part of the core histones (H2A, H2B, H3 and H4). Histone deacetylation gives a tag for epigenetic repression and plays an important role in transcriptional regulation, cell cycle progression and developmental events. Able to deacetylate all 4 core histones. This chain is Histone deacetylase HDT1 (HDT1), found in Zea mays (Maize).